The chain runs to 842 residues: Squamosa promoter-binding-like protein 9 (842 aa).

Gly residues predominate over residues 1 to 18 (MDAPGGGGGGGGGGGGVD). 3 disordered regions span residues 1-22 (MDAP…AGEP), 59-97 (ALLP…RVRK), and 140-168 (RKKP…TPAE). Over residues 69–85 (PAEAEAEAAGPASLPSS) the composition is skewed to low complexity. Gly residues predominate over residues 146–162 (AGRGSGAAVGGSGGGAS). The SBP-type; atypical zinc finger occupies 168 to 245 (EMKCQVPGCE…ERHNKRRRRK (78 aa)). Zn(2+)-binding residues include Cys-171, Cys-176, Cys-193, Cys-196, Cys-212, Cys-215, His-219, and Cys-231. Residues 228–244 (KRSCRRKLERHNKRRRR) carry the Bipartite nuclear localization signal motif. A compositionally biased stretch (basic residues) spans 236 to 246 (ERHNKRRRRKP). A disordered region spans residues 236–256 (ERHNKRRRRKPDSKGILEKDI).

In terms of tissue distribution, ubiquitous.

Its subcellular location is the nucleus. Functionally, trans-acting factor that binds specifically to the consensus nucleotide sequence 5'-TNCGTACAA-3'. The sequence is that of Squamosa promoter-binding-like protein 9 (SPL9) from Oryza sativa subsp. japonica (Rice).